A 145-amino-acid polypeptide reads, in one-letter code: D-aminoacyl-tRNA deacylase (145 aa).

The Gly-cisPro motif, important for rejection of L-amino acids signature appears at 137–138 (GP).

Belongs to the DTD family. In terms of assembly, homodimer.

It localises to the cytoplasm. It catalyses the reaction glycyl-tRNA(Ala) + H2O = tRNA(Ala) + glycine + H(+). The catalysed reaction is a D-aminoacyl-tRNA + H2O = a tRNA + a D-alpha-amino acid + H(+). Its function is as follows. An aminoacyl-tRNA editing enzyme that deacylates mischarged D-aminoacyl-tRNAs. Also deacylates mischarged glycyl-tRNA(Ala), protecting cells against glycine mischarging by AlaRS. Acts via tRNA-based rather than protein-based catalysis; rejects L-amino acids rather than detecting D-amino acids in the active site. By recycling D-aminoacyl-tRNA to D-amino acids and free tRNA molecules, this enzyme counteracts the toxicity associated with the formation of D-aminoacyl-tRNA entities in vivo and helps enforce protein L-homochirality. This is D-aminoacyl-tRNA deacylase from Francisella tularensis subsp. novicida (strain U112).